A 394-amino-acid chain; its full sequence is Elongation factor Tu (394 aa).

In terms of domain architecture, tr-type G spans 10–204 (KPHVNIGTIG…AVDSYIPQPV (195 aa)). The segment at 19-26 (GHVDHGKT) is G1. Position 19–26 (19–26 (GHVDHGKT)) interacts with GTP. A Mg(2+)-binding site is contributed by Thr26. The interval 60-64 (GITIS) is G2. Residues 81–84 (DCPG) form a G3 region. GTP is bound by residues 81–85 (DCPGH) and 136–139 (NKVD). The segment at 136–139 (NKVD) is G4. Residues 174–176 (SAL) are G5.

The protein belongs to the TRAFAC class translation factor GTPase superfamily. Classic translation factor GTPase family. EF-Tu/EF-1A subfamily. Monomer.

The protein localises to the cytoplasm. It catalyses the reaction GTP + H2O = GDP + phosphate + H(+). In terms of biological role, GTP hydrolase that promotes the GTP-dependent binding of aminoacyl-tRNA to the A-site of ribosomes during protein biosynthesis. This chain is Elongation factor Tu, found in Rickettsia helvetica.